A 121-amino-acid chain; its full sequence is Large ribosomal subunit protein uL24 (121 aa).

It belongs to the universal ribosomal protein uL24 family. As to quaternary structure, part of the 50S ribosomal subunit.

One of two assembly initiator proteins, it binds directly to the 5'-end of the 23S rRNA, where it nucleates assembly of the 50S subunit. Functionally, located at the polypeptide exit tunnel on the outside of the subunit. This Methanocorpusculum labreanum (strain ATCC 43576 / DSM 4855 / Z) protein is Large ribosomal subunit protein uL24.